The chain runs to 73 residues: Large ribosomal subunit protein uL29 (73 aa).

Residues 1–20 (MYKAKDLRDQSLEELEATHD) are disordered.

This sequence belongs to the universal ribosomal protein uL29 family.

The polypeptide is Large ribosomal subunit protein uL29 (Protochlamydia amoebophila (strain UWE25)).